The following is a 342-amino-acid chain: Anthranilate phosphoribosyltransferase (342 aa).

5-phospho-alpha-D-ribose 1-diphosphate-binding positions include Gly-79, 82–83 (GD), Thr-87, 89–92 (NIST), 107–115 (KHCNQRISS), and Ser-119. Position 79 (Gly-79) interacts with anthranilate. Ser-91 lines the Mg(2+) pocket. Asn-110 contacts anthranilate. Arg-165 contacts anthranilate. The Mg(2+) site is built by Asp-223 and Glu-224.

It belongs to the anthranilate phosphoribosyltransferase family. Homodimer. It depends on Mg(2+) as a cofactor.

The catalysed reaction is N-(5-phospho-beta-D-ribosyl)anthranilate + diphosphate = 5-phospho-alpha-D-ribose 1-diphosphate + anthranilate. It participates in amino-acid biosynthesis; L-tryptophan biosynthesis; L-tryptophan from chorismate: step 2/5. In terms of biological role, catalyzes the transfer of the phosphoribosyl group of 5-phosphorylribose-1-pyrophosphate (PRPP) to anthranilate to yield N-(5'-phosphoribosyl)-anthranilate (PRA). This is Anthranilate phosphoribosyltransferase from Buchnera aphidicola subsp. Acyrthosiphon pisum (strain 5A).